We begin with the raw amino-acid sequence, 352 residues long: GTPase Obg (352 aa).

The region spanning M1–L159 is the Obg domain. In terms of domain architecture, OBG-type G spans A160–P327. GTP contacts are provided by residues G166–S173, F191–V195, D212–G215, N279–D282, and S308–A310. 2 residues coordinate Mg(2+): S173 and T193. Residues S329 to I352 form a disordered region. Acidic residues predominate over residues V339–I352.

This sequence belongs to the TRAFAC class OBG-HflX-like GTPase superfamily. OBG GTPase family. In terms of assembly, monomer. Mg(2+) serves as cofactor.

The protein resides in the cytoplasm. Functionally, an essential GTPase which binds GTP, GDP and possibly (p)ppGpp with moderate affinity, with high nucleotide exchange rates and a fairly low GTP hydrolysis rate. Plays a role in control of the cell cycle, stress response, ribosome biogenesis and in those bacteria that undergo differentiation, in morphogenesis control. This Erythrobacter litoralis (strain HTCC2594) protein is GTPase Obg.